Consider the following 118-residue polypeptide: Small ribosomal subunit protein uS13 (118 aa).

Positions 94-118 (GLPVRGQRTKTNARTRKGPRKPIKK) are disordered.

Belongs to the universal ribosomal protein uS13 family. Part of the 30S ribosomal subunit. Forms a loose heterodimer with protein S19. Forms two bridges to the 50S subunit in the 70S ribosome.

Functionally, located at the top of the head of the 30S subunit, it contacts several helices of the 16S rRNA. In the 70S ribosome it contacts the 23S rRNA (bridge B1a) and protein L5 of the 50S subunit (bridge B1b), connecting the 2 subunits; these bridges are implicated in subunit movement. Contacts the tRNAs in the A and P-sites. This chain is Small ribosomal subunit protein uS13, found in Histophilus somni (strain 129Pt) (Haemophilus somnus).